The sequence spans 70 residues: Probable non-specific lipid-transfer protein 2 (70 aa).

4 disulfide bridges follow: cysteine 4/cysteine 38, cysteine 12/cysteine 26, cysteine 27/cysteine 62, and cysteine 36/cysteine 69.

Potential phospholipid transfer protein. This is Probable non-specific lipid-transfer protein 2 from Zea mays (Maize).